A 360-amino-acid polypeptide reads, in one-letter code: 3-isopropylmalate dehydrogenase (360 aa).

Position 76–89 (76–89 (GPKWEPLDYSLRPE)) interacts with NAD(+). Residues R96, R106, R134, and D224 each contribute to the substrate site. D224, D248, and D252 together coordinate Mg(2+). 282-294 (GSAPDIAGRGIAN) contributes to the NAD(+) binding site.

Belongs to the isocitrate and isopropylmalate dehydrogenases family. LeuB type 1 subfamily. In terms of assembly, homodimer. It depends on Mg(2+) as a cofactor. Mn(2+) is required as a cofactor.

The protein localises to the cytoplasm. It carries out the reaction (2R,3S)-3-isopropylmalate + NAD(+) = 4-methyl-2-oxopentanoate + CO2 + NADH. The protein operates within amino-acid biosynthesis; L-leucine biosynthesis; L-leucine from 3-methyl-2-oxobutanoate: step 3/4. In terms of biological role, catalyzes the oxidation of 3-carboxy-2-hydroxy-4-methylpentanoate (3-isopropylmalate) to 3-carboxy-4-methyl-2-oxopentanoate. The product decarboxylates to 4-methyl-2 oxopentanoate. This chain is 3-isopropylmalate dehydrogenase, found in Methylococcus capsulatus (strain ATCC 33009 / NCIMB 11132 / Bath).